A 444-amino-acid chain; its full sequence is C4-dicarboxylate transport protein (444 aa).

The next 9 membrane-spanning stretches (helical) occupy residues 21-41, 57-77, 92-112, 161-181, 201-221, 234-254, 320-340, 345-365, and 368-388; these read HLYV…HFYP, LVKM…IAGM, IYFL…ANVV, GDIL…ALVG, LVSI…AFTI, LLIG…LGAV, IYMT…LSLS, LLLV…AGFI, and AATL…ILGI.

This sequence belongs to the dicarboxylate/amino acid:cation symporter (DAACS) (TC 2.A.23) family.

Its subcellular location is the cell inner membrane. Its function is as follows. Responsible for the transport of dicarboxylates such as succinate, fumarate, and malate from the periplasm across the membrane. This Brucella anthropi (strain ATCC 49188 / DSM 6882 / CCUG 24695 / JCM 21032 / LMG 3331 / NBRC 15819 / NCTC 12168 / Alc 37) (Ochrobactrum anthropi) protein is C4-dicarboxylate transport protein.